The following is a 177-amino-acid chain: Cytochrome c oxidase assembly protein CtaG (177 aa).

Residues 1-8 (MTQKAKNT) lie on the Cytoplasmic side of the membrane. The chain crosses the membrane as a helical; Signal-anchor for type II membrane protein span at residues 9–29 (IYLLILIILSMLCLVYASVPL). The Periplasmic portion of the chain corresponds to 30–177 (YSIFCKVTGY…TFFKYKENTK (148 aa)).

This sequence belongs to the COX11/CtaG family.

It localises to the cell inner membrane. In terms of biological role, exerts its effect at some terminal stage of cytochrome c oxidase synthesis, probably by being involved in the insertion of the copper B into subunit I. The polypeptide is Cytochrome c oxidase assembly protein CtaG (Ehrlichia ruminantium (strain Welgevonden)).